The chain runs to 298 residues: ATP phosphoribosyltransferase (298 aa).

This sequence belongs to the ATP phosphoribosyltransferase family. Long subfamily. The cofactor is Mg(2+).

Its subcellular location is the cytoplasm. The enzyme catalyses 1-(5-phospho-beta-D-ribosyl)-ATP + diphosphate = 5-phospho-alpha-D-ribose 1-diphosphate + ATP. It participates in amino-acid biosynthesis; L-histidine biosynthesis; L-histidine from 5-phospho-alpha-D-ribose 1-diphosphate: step 1/9. With respect to regulation, feedback inhibited by histidine. Functionally, catalyzes the condensation of ATP and 5-phosphoribose 1-diphosphate to form N'-(5'-phosphoribosyl)-ATP (PR-ATP). Has a crucial role in the pathway because the rate of histidine biosynthesis seems to be controlled primarily by regulation of HisG enzymatic activity. The sequence is that of ATP phosphoribosyltransferase from Aliivibrio salmonicida (strain LFI1238) (Vibrio salmonicida (strain LFI1238)).